A 379-amino-acid polypeptide reads, in one-letter code: Chaperone protein DnaJ (379 aa).

The J domain maps to 7–72; it reads CYYETLEVER…DKRAAYDRYG (66 aa). A CR-type zinc finger spans residues 135 to 213; it reads GKTAQIEIPV…CTGSGRVTKE (79 aa). Cysteine 148, cysteine 151, cysteine 165, cysteine 168, cysteine 187, cysteine 190, cysteine 201, and cysteine 204 together coordinate Zn(2+). CXXCXGXG motif repeat units lie at residues 148–155, 165–172, 187–194, and 201–208; these read CESCSGTG, CSTCGGAG, CPSCQGRG, and CPSCTGSG.

Belongs to the DnaJ family. Homodimer. The cofactor is Zn(2+).

It localises to the cytoplasm. Participates actively in the response to hyperosmotic and heat shock by preventing the aggregation of stress-denatured proteins and by disaggregating proteins, also in an autonomous, DnaK-independent fashion. Unfolded proteins bind initially to DnaJ; upon interaction with the DnaJ-bound protein, DnaK hydrolyzes its bound ATP, resulting in the formation of a stable complex. GrpE releases ADP from DnaK; ATP binding to DnaK triggers the release of the substrate protein, thus completing the reaction cycle. Several rounds of ATP-dependent interactions between DnaJ, DnaK and GrpE are required for fully efficient folding. Also involved, together with DnaK and GrpE, in the DNA replication of plasmids through activation of initiation proteins. The chain is Chaperone protein DnaJ from Rhodopseudomonas palustris (strain HaA2).